We begin with the raw amino-acid sequence, 666 residues long: MAKKVDQTNLISNIKSLTLSGYVKKADRNIIVEDLIILKDKLLEQNNPEAKDNASTLNKVIKALDMDKMSKKEKDLWKNSKKSLIGIVNGYYESYKNTNNQDYDKNNSKNNSKKNNLNIDEVEKILDGKILSYNKFNENHPMNGVSYDKSKNLYIVNHDNVIKKFKTLQCATGYIINLGEELGKKNSKSFQKDTENENIIKKYFQYGGYYFLVYFISGIMYFDIQHIISVLNLKNSCVRKKREEFADNISKHIWFKNEHDGYIKRELVTEEIMYNIILSSNSTFSKSFKTEVSKILVQLRENGELDFVDDKIVLKDKSKRGLRSRYEVNKMVNEITDHGFDNLAEQQSIPFMYGNLSNVEVIRNMISMGNRIEVSTYHKDHVMYVFVIPIKQDHNHIIIKIGYSFDIVDRIKTLRNEYKSRVYLIRLKFVRGESDEDEFHKIIKQSYPHLIEEVNINNKSKTELYKFHPILIEQFDGYMNEFNNNKKIKKAPILTPEESVIVQEVKTQDSVFLQQLMEFKNNSDSVNKYIYDLIVLREKYDHELRVLEYKKNMVKMKYETHDQMKEYMNLKIKYLEVKNKYLNTIRSKNSDKPKYLCSDDLENSDLEDSDLENSDLENSEDLEKIVPNKIRMTKSAPPTSRKYTTVKSSSISRIPLRKSCSKIIEL.

This is an uncharacterized protein from Acanthamoeba polyphaga mimivirus (APMV).